Consider the following 50-residue polypeptide: Large ribosomal subunit protein bL33 (50 aa).

Belongs to the bacterial ribosomal protein bL33 family.

The sequence is that of Large ribosomal subunit protein bL33 from Mycoplasmopsis synoviae (strain 53) (Mycoplasma synoviae).